We begin with the raw amino-acid sequence, 162 residues long: MDILGEIVNVDEYVEKLELQKNDIGFYKCPFCDYTNADAKVVRKHVKSKHLEEIEKELKKLESQKSKNNGKKQTGQKKQGKGKKQPKRVRETCVSTQERKDYVLFFCHNHKVRLHLANGEVLEGKCCCKDPYTVLVDVGKGDVVIVNKAYIVKYVPLDLEKL.

Residues 29-50 form a C2H2-type zinc finger; that stretch reads CPFCDYTNADAKVVRKHVKSKH. Residues 60-93 are disordered; sequence KLESQKSKNNGKKQTGQKKQGKGKKQPKRVRETC. Basic residues predominate over residues 68 to 87; sequence NNGKKQTGQKKQGKGKKQPK.

This sequence to M.jannaschii MJECS06.

This is an uncharacterized protein from Methanocaldococcus jannaschii (strain ATCC 43067 / DSM 2661 / JAL-1 / JCM 10045 / NBRC 100440) (Methanococcus jannaschii).